Here is a 64-residue protein sequence, read N- to C-terminus: Cytochrome c oxidase subunit 2 (64 aa).

The Mitochondrial intermembrane portion of the chain corresponds to 1 to 14 (MAHPSQLGFQDAAS). A helical membrane pass occupies residues 15–45 (PVMEELXHFHDHTLMIVFLISTLVXYIIVAM). The Mitochondrial matrix portion of the chain corresponds to 46-64 (VSTKLTNKYVLDSQEIEIV).

Belongs to the cytochrome c oxidase subunit 2 family. In terms of assembly, component of the cytochrome c oxidase (complex IV, CIV), a multisubunit enzyme composed of 14 subunits. The complex is composed of a catalytic core of 3 subunits MT-CO1, MT-CO2 and MT-CO3, encoded in the mitochondrial DNA, and 11 supernumerary subunits COX4I, COX5A, COX5B, COX6A, COX6B, COX6C, COX7A, COX7B, COX7C, COX8 and NDUFA4, which are encoded in the nuclear genome. The complex exists as a monomer or a dimer and forms supercomplexes (SCs) in the inner mitochondrial membrane with NADH-ubiquinone oxidoreductase (complex I, CI) and ubiquinol-cytochrome c oxidoreductase (cytochrome b-c1 complex, complex III, CIII), resulting in different assemblies (supercomplex SCI(1)III(2)IV(1) and megacomplex MCI(2)III(2)IV(2)). Found in a complex with TMEM177, COA6, COX18, COX20, SCO1 and SCO2. Interacts with TMEM177 in a COX20-dependent manner. Interacts with COX20. Interacts with COX16. Cu cation serves as cofactor.

It localises to the mitochondrion inner membrane. It catalyses the reaction 4 Fe(II)-[cytochrome c] + O2 + 8 H(+)(in) = 4 Fe(III)-[cytochrome c] + 2 H2O + 4 H(+)(out). In terms of biological role, component of the cytochrome c oxidase, the last enzyme in the mitochondrial electron transport chain which drives oxidative phosphorylation. The respiratory chain contains 3 multisubunit complexes succinate dehydrogenase (complex II, CII), ubiquinol-cytochrome c oxidoreductase (cytochrome b-c1 complex, complex III, CIII) and cytochrome c oxidase (complex IV, CIV), that cooperate to transfer electrons derived from NADH and succinate to molecular oxygen, creating an electrochemical gradient over the inner membrane that drives transmembrane transport and the ATP synthase. Cytochrome c oxidase is the component of the respiratory chain that catalyzes the reduction of oxygen to water. Electrons originating from reduced cytochrome c in the intermembrane space (IMS) are transferred via the dinuclear copper A center (CU(A)) of subunit 2 and heme A of subunit 1 to the active site in subunit 1, a binuclear center (BNC) formed by heme A3 and copper B (CU(B)). The BNC reduces molecular oxygen to 2 water molecules using 4 electrons from cytochrome c in the IMS and 4 protons from the mitochondrial matrix. The chain is Cytochrome c oxidase subunit 2 (mt-co2) from Scaphirhynchus platorynchus (Shovelnose sturgeon).